Consider the following 197-residue polypeptide: MERVNDSALNRLLTPLMRRVRLMLARAVVNVINDGRKVQNLQVGLLDDEESDEVERLQNYGHFSVPLPGAEALIACVGAQRDQGIAVVVEDRRYRPTNLEPGDAGIYHHEGHRIRLTKDGRCIITCKTVEVYADESMTVDTPRTTFTGDVEIQKGLGVKGKSQFDSNITAPDAIINGKSTDKHIHRGDSGGTTGPMQ.

The disordered stretch occupies residues 172–197 (DAIINGKSTDKHIHRGDSGGTTGPMQ). The span at 179–188 (STDKHIHRGD) shows a compositional bias: basic and acidic residues. 2 residues coordinate Fe cation: His-183 and His-185. Residues Asp-188 and Ser-189 each contribute to the Ca(2+) site. Position 188 (Asp-188) interacts with chloride.

Homotrimer. Part of a complex composed of three DNA circularization protein N, three baseplate hub protein gp44 and three sub-complex wedge (made of two copies of each baseplate protein gp46, gp47 and gp48) that forms the baseplate. Ca(2+) serves as cofactor. Requires chloride as cofactor. It depends on Fe cation as a cofactor.

Its subcellular location is the virion. It localises to the host cytoplasm. Component of the baseplate that forms a central needlelike spike used to puncture the host cell membrane for tube insertion during virus entry. Probably involved in baseplate and tail assembly. Serves as the distal plug of tail tube channel and might regulate the process of the phage DNA and protein ejection into the host cell. This is Baseplate puncturing device gp45 from Escherichia phage Mu (Bacteriophage Mu).